Here is a 255-residue protein sequence, read N- to C-terminus: 1-(5-phosphoribosyl)-5-[(5-phosphoribosylamino)methylideneamino] imidazole-4-carboxamide isomerase (255 aa).

The Proton acceptor role is filled by Asp-8. The active-site Proton donor is the Asp-129.

Belongs to the HisA/HisF family.

The protein resides in the cytoplasm. The enzyme catalyses 1-(5-phospho-beta-D-ribosyl)-5-[(5-phospho-beta-D-ribosylamino)methylideneamino]imidazole-4-carboxamide = 5-[(5-phospho-1-deoxy-D-ribulos-1-ylimino)methylamino]-1-(5-phospho-beta-D-ribosyl)imidazole-4-carboxamide. It participates in amino-acid biosynthesis; L-histidine biosynthesis; L-histidine from 5-phospho-alpha-D-ribose 1-diphosphate: step 4/9. The polypeptide is 1-(5-phosphoribosyl)-5-[(5-phosphoribosylamino)methylideneamino] imidazole-4-carboxamide isomerase (Prochlorococcus marinus (strain MIT 9303)).